The primary structure comprises 1269 residues: Rho GTPase-activating protein 29 (1269 aa).

Phosphoserine is present on residues Ser171, Ser176, Ser179, and Ser190. In terms of domain architecture, F-BAR spans 192 to 462; it reads IELDSMLLKN…SAKLYDPGQE (271 aa). Positions 296–418 form a coiled coil; sequence RKNEMEKQRK…EILTQLRKLV (123 aa). 2 disordered regions span residues 472–523 and 540–599; these read SAEE…NSAD and DSES…NSLG. Ser499, Ser519, and Ser552 each carry phosphoserine. Residues 540 to 559 are compositionally biased toward low complexity; it reads DSESTGGSSESRSLDSESIS. A Phorbol-ester/DAG-type zinc finger spans residues 612 to 657; that stretch reads THKFRKLRSPTKCRDCEGIVVFHGVECEECLLVCHRKCLENLVIIC. The region spanning 671–886 is the Rho-GAP domain; the sequence is AEFTQVAKKE…FLITYSQKIF (216 aa). Positions 909–936 are disordered; it reads PGYLPKSLLSPEERDPERSMKSLFFSSK. The residue at position 918 (Ser918) is a Phosphoserine. Residues 919 to 928 are compositionally biased toward basic and acidic residues; that stretch reads PEERDPERSM. Residues Ser954 and Ser1026 each carry the phosphoserine modification. The tract at residues 1120 to 1269 is disordered; the sequence is RSSGDHPVSI…DLEDEIPQFV (150 aa). Residues 1128 to 1145 show a composition bias toward polar residues; sequence SITQPSKPYTEPVRSTRQ. Phosphoserine is present on residues Ser1152 and Ser1154. Over residues 1162 to 1172 the composition is skewed to polar residues; the sequence is TPRTLQPQHWT. Residues 1229-1241 are compositionally biased toward basic and acidic residues; the sequence is SRPEEKAEERDQP. Over residues 1259 to 1269 the composition is skewed to acidic residues; that stretch reads EDLEDEIPQFV. Positions 1266-1269 are interaction with PTPN13/PTPL1; the sequence is PQFV.

In terms of assembly, interacts with PTPN13/PTPL1. Interacts with RAP2A via its coiled coil domain. Interacts with RASIP1.

In terms of biological role, GTPase activator for the Rho-type GTPases by converting them to an inactive GDP-bound state. Has strong activity toward RHOA, and weaker activity toward RAC1 and CDC42. May act as a specific effector of RAP2A to regulate Rho. In concert with RASIP1, suppresses RhoA signaling and dampens ROCK and MYH9 activities in endothelial cells and plays an essential role in blood vessel tubulogenesis. The protein is Rho GTPase-activating protein 29 (ARHGAP29) of Bos taurus (Bovine).